Reading from the N-terminus, the 418-residue chain is Serine--tRNA ligase (418 aa).

227-229 is an L-serine binding site; it reads TSE. ATP-binding positions include 258 to 260 and Val274; that span reads RRE. Glu281 serves as a coordination point for L-serine. 345-348 provides a ligand contact to ATP; that stretch reads ELTS. Thr380 lines the L-serine pocket.

This sequence belongs to the class-II aminoacyl-tRNA synthetase family. Type-1 seryl-tRNA synthetase subfamily. In terms of assembly, homodimer. The tRNA molecule binds across the dimer.

It is found in the cytoplasm. It catalyses the reaction tRNA(Ser) + L-serine + ATP = L-seryl-tRNA(Ser) + AMP + diphosphate + H(+). It carries out the reaction tRNA(Sec) + L-serine + ATP = L-seryl-tRNA(Sec) + AMP + diphosphate + H(+). Its pathway is aminoacyl-tRNA biosynthesis; selenocysteinyl-tRNA(Sec) biosynthesis; L-seryl-tRNA(Sec) from L-serine and tRNA(Sec): step 1/1. Its function is as follows. Catalyzes the attachment of serine to tRNA(Ser). Is also able to aminoacylate tRNA(Sec) with serine, to form the misacylated tRNA L-seryl-tRNA(Sec), which will be further converted into selenocysteinyl-tRNA(Sec). This Rhodococcus opacus (strain B4) protein is Serine--tRNA ligase.